The primary structure comprises 310 residues: Fucose-specific lectin (310 aa).

A run of 6 repeats spans residues 1–53, 54–103, 104–151, 152–209, 210–256, and 257–310. A 6 X approximate tandem repeats region spans residues 1–310; the sequence is MSTPGAQEVL…LGRRALPPAE (310 aa). Beta-L-fucose contacts are provided by R25, E37, W44, R73, E85, W94, R126, E138, W146, R177, Q189, W198, R230, Q242, R277, and E291.

This sequence belongs to the fungal fucose-specific lectin family.

Functionally, lectin that specifically binds to L-fucose and weakly reacts with mannose and N-acetyl-neuraminic acid. Has strongest preference for the alpha-1,6-fucosylated chain (core fucose) on glycoproteins among alpha-1,2-, alpha-1,3-, alpha-1,4-, and alpha-1,6-fucosylated chains. Binds to fucose residues of IgE in mice and human, causing antigen-independent IgE-mediated mast cell activation and anaphylactoid reactions in mice and is possibly implicated in allergic response to Aspergillus oryzae in humans. Induces secretion of pro-inflammatory cytokines IL6 and IL8 implicated in ocular diseases such as mycotic keratitis, probably through its interaction with host toll-like receptors TLR2 and TLR4, followed by up-regulation of pro-inflammatory cytokines. The protein is Fucose-specific lectin of Aspergillus oryzae (Yellow koji mold).